A 331-amino-acid chain; its full sequence is Probable cytosolic iron-sulfur protein assembly protein Ciao1 (331 aa).

7 WD repeats span residues 12–51 (GHKG…WTTK), 57–96 (GHKR…ATLE), 97–136 (GHEN…EFEC), 142–181 (AHSQ…SDWD), 188–227 (SHTS…NDAG), 246–285 (EHSR…KRDA), and 297–331 (AHEQ…KLQE).

This sequence belongs to the WD repeat CIA1 family.

Essential component of the cytosolic iron-sulfur (Fe/S) protein assembly machinery. Required for the maturation of extramitochondrial Fe/S proteins. The protein is Probable cytosolic iron-sulfur protein assembly protein Ciao1 of Drosophila virilis (Fruit fly).